A 443-amino-acid polypeptide reads, in one-letter code: Protein king tubby (443 aa).

Disordered stretches follow at residues 57 to 85 (TNGS…LSTI) and 98 to 189 (HELE…ESEG). Residues 68-85 (AVNTSRNHSNNMRSLSTI) are compositionally biased toward polar residues. Residues 113 to 128 (QHQQSASHSANSTQSQ) show a composition bias toward low complexity. Ser-136 carries the post-translational modification Phosphoserine. Positions 148 to 160 (NRNVAAAAPVRPA) are enriched in low complexity. Gly residues predominate over residues 177-186 (NGTGNGTGGE).

The protein belongs to the TUB family.

Its subcellular location is the cytoplasm. The protein resides in the nucleus. It localises to the cell projection. The protein localises to the cilium membrane. It is found in the rhabdomere. In Drosophila yakuba (Fruit fly), this protein is Protein king tubby.